A 24-amino-acid polypeptide reads, in one-letter code: FLPMLAGLAASMVPKLVCLITKKC.

Cys18 and Cys24 are joined by a disulfide.

As to expression, expressed by the skin glands.

Its subcellular location is the secreted. Functionally, antibacterial activity against Gram-positive bacterium S.aureus and Gram-negative bacterium E.coli. The sequence is that of Brevinin-1La from Rana luteiventris (Columbia spotted frog).